We begin with the raw amino-acid sequence, 358 residues long: MQITRLNIERVRNLKAVALSGLQPFNIFYGANGSGKTSILEAVHLLATGRSFRTHMPKHYIQQNAQDAIIFAQSLSEKIGMQKLLSGEQLIKVNGDTVATQGQLAKLLPLQHLDPQSTDIIDHGAKPRRQLLDWLMFHVEPEFYFAWQYYSRALKQRNMLLKTKRQLSLAELEPWNKMLSEYGEMLHSQRLVTVERWKDFFQQDLAQLLPDLQIELEYSPGFHSEVGLWQDLLNYHNKDVERRYTEYGPHRADLRLKTALGDADDVLSRGQKKLLMMALKLSQIAMLHASNKETVVLLDDLTAELDSNAQRRLIERLSQLGSQVFITTLDHQAVTQHLDGLSISYQLYNVDHGQVHAV.

30 to 37 (GANGSGKT) contacts ATP.

It belongs to the RecF family.

Its subcellular location is the cytoplasm. In terms of biological role, the RecF protein is involved in DNA metabolism; it is required for DNA replication and normal SOS inducibility. RecF binds preferentially to single-stranded, linear DNA. It also seems to bind ATP. This Acinetobacter baylyi (strain ATCC 33305 / BD413 / ADP1) protein is DNA replication and repair protein RecF.